Here is a 295-residue protein sequence, read N- to C-terminus: Acetylglutamate kinase (295 aa).

Substrate is bound by residues 64-65 (GG), Arg86, and Asn179.

Belongs to the acetylglutamate kinase family. ArgB subfamily.

Its subcellular location is the cytoplasm. The enzyme catalyses N-acetyl-L-glutamate + ATP = N-acetyl-L-glutamyl 5-phosphate + ADP. The protein operates within amino-acid biosynthesis; L-arginine biosynthesis; N(2)-acetyl-L-ornithine from L-glutamate: step 2/4. Functionally, catalyzes the ATP-dependent phosphorylation of N-acetyl-L-glutamate. This chain is Acetylglutamate kinase, found in Thermosynechococcus vestitus (strain NIES-2133 / IAM M-273 / BP-1).